A 340-amino-acid chain; its full sequence is Ketol-acid reductoisomerase (NADP(+)) (340 aa).

The KARI N-terminal Rossmann domain occupies 1–182; sequence MRVYYDRDCD…GGGRSGIIET (182 aa). NADP(+) contacts are provided by residues 24-27, R48, S51, S53, and 83-86; these read YGSQ and DELQ. The active site involves H108. Position 134 (G134) interacts with NADP(+). Residues 183–329 form the KARI C-terminal knotted domain; it reads NFREECETDL…ETLRGMMPWI (147 aa). The Mg(2+) site is built by D191, E195, E227, and E231. S252 lines the substrate pocket.

It belongs to the ketol-acid reductoisomerase family. The cofactor is Mg(2+).

The catalysed reaction is (2R)-2,3-dihydroxy-3-methylbutanoate + NADP(+) = (2S)-2-acetolactate + NADPH + H(+). The enzyme catalyses (2R,3R)-2,3-dihydroxy-3-methylpentanoate + NADP(+) = (S)-2-ethyl-2-hydroxy-3-oxobutanoate + NADPH + H(+). Its pathway is amino-acid biosynthesis; L-isoleucine biosynthesis; L-isoleucine from 2-oxobutanoate: step 2/4. It functions in the pathway amino-acid biosynthesis; L-valine biosynthesis; L-valine from pyruvate: step 2/4. Its function is as follows. Involved in the biosynthesis of branched-chain amino acids (BCAA). Catalyzes an alkyl-migration followed by a ketol-acid reduction of (S)-2-acetolactate (S2AL) to yield (R)-2,3-dihydroxy-isovalerate. In the isomerase reaction, S2AL is rearranged via a Mg-dependent methyl migration to produce 3-hydroxy-3-methyl-2-ketobutyrate (HMKB). In the reductase reaction, this 2-ketoacid undergoes a metal-dependent reduction by NADPH to yield (R)-2,3-dihydroxy-isovalerate. This chain is Ketol-acid reductoisomerase (NADP(+)), found in Jannaschia sp. (strain CCS1).